The primary structure comprises 619 residues: Chaperone protein DnaK (619 aa).

A Phosphothreonine; by autocatalysis modification is found at Thr179. The segment at Gln584–Lys619 is disordered. The segment covering Ala585 to Asp605 has biased composition (low complexity). A compositionally biased stretch (basic and acidic residues) spans Gly606–Lys619.

The protein belongs to the heat shock protein 70 family.

Its function is as follows. Acts as a chaperone. The chain is Chaperone protein DnaK from Elusimicrobium minutum (strain Pei191).